Reading from the N-terminus, the 568-residue chain is Mannitol 2-dehydrogenase (568 aa).

109–120 (IVHVGVGGFHRA) contributes to the NAD(+) binding site.

Belongs to the mannitol dehydrogenase family. Monomer.

It carries out the reaction D-mannitol + NAD(+) = D-fructose + NADH + H(+). Its function is as follows. Catalyzes the NAD(H)-dependent interconversion of D-fructose and D-mannitol in the mannitol metabolic pathway. In Phaeosphaeria nodorum (strain SN15 / ATCC MYA-4574 / FGSC 10173) (Glume blotch fungus), this protein is Mannitol 2-dehydrogenase.